Consider the following 185-residue polypeptide: Urease accessory protein UreE (185 aa).

The disordered stretch occupies residues 153–185 (LRANSAQGHGHSHSHSHDHHGYHHHGDGHWHKH). The segment covering 162-175 (GHSHSHSHDHHGYH) has biased composition (basic residues). A compositionally biased stretch (basic and acidic residues) spans 176–185 (HHGDGHWHKH).

Belongs to the UreE family.

Its subcellular location is the cytoplasm. Involved in urease metallocenter assembly. Binds nickel. Probably functions as a nickel donor during metallocenter assembly. This Haemophilus influenzae (strain 86-028NP) protein is Urease accessory protein UreE.